The sequence spans 369 residues: S-(hydroxymethyl)glutathione dehydrogenase (369 aa).

Zn(2+) is bound by residues Cys40, His62, Cys92, Cys95, Cys98, Cys106, and Cys169.

The protein belongs to the zinc-containing alcohol dehydrogenase family. Class-III subfamily. Homodimer. Requires Zn(2+) as cofactor.

The protein localises to the cytoplasm. The catalysed reaction is S-(hydroxymethyl)glutathione + NADP(+) = S-formylglutathione + NADPH + H(+). It catalyses the reaction S-(hydroxymethyl)glutathione + NAD(+) = S-formylglutathione + NADH + H(+). The enzyme catalyses a primary alcohol + NAD(+) = an aldehyde + NADH + H(+). It carries out the reaction a secondary alcohol + NAD(+) = a ketone + NADH + H(+). The catalysed reaction is S-nitrosoglutathione + NADH + H(+) = S-(hydroxysulfenamide)glutathione + NAD(+). Has high formaldehyde dehydrogenase activity in the presence of glutathione and catalyzes the oxidation of normal alcohols in a reaction that is not GSH-dependent. In addition, hemithiolacetals other than those formed from GSH, including omega-thiol fatty acids, also are substrates. Also acts as a S-nitroso-glutathione reductase by catalyzing the NADH-dependent reduction of S-nitrosoglutathione. The chain is S-(hydroxymethyl)glutathione dehydrogenase (frmA) from Escherichia coli O1:K1 / APEC.